The following is a 236-amino-acid chain: Phosphoribosylaminoimidazole-succinocarboxamide synthase (236 aa).

The protein belongs to the SAICAR synthetase family.

The catalysed reaction is 5-amino-1-(5-phospho-D-ribosyl)imidazole-4-carboxylate + L-aspartate + ATP = (2S)-2-[5-amino-1-(5-phospho-beta-D-ribosyl)imidazole-4-carboxamido]succinate + ADP + phosphate + 2 H(+). It participates in purine metabolism; IMP biosynthesis via de novo pathway; 5-amino-1-(5-phospho-D-ribosyl)imidazole-4-carboxamide from 5-amino-1-(5-phospho-D-ribosyl)imidazole-4-carboxylate: step 1/2. The chain is Phosphoribosylaminoimidazole-succinocarboxamide synthase from Pseudomonas entomophila (strain L48).